The sequence spans 467 residues: tRNA modification GTPase MnmE (467 aa).

(6S)-5-formyl-5,6,7,8-tetrahydrofolate contacts are provided by R25, E87, and K130. One can recognise a TrmE-type G domain in the interval 226 to 389; the sequence is GLSVVLAGQP…LRGELLRIAG (164 aa). N236 lines the K(+) pocket. GTP is bound by residues 236 to 241, 255 to 261, and 280 to 283; these read NVGKSS, TPIAGTT, and DTAG. Residue S240 coordinates Mg(2+). K(+) is bound by residues T255, I257, and T260. T261 contributes to the Mg(2+) binding site. K467 provides a ligand contact to (6S)-5-formyl-5,6,7,8-tetrahydrofolate.

It belongs to the TRAFAC class TrmE-Era-EngA-EngB-Septin-like GTPase superfamily. TrmE GTPase family. As to quaternary structure, homodimer. Heterotetramer of two MnmE and two MnmG subunits. The cofactor is K(+).

The protein localises to the cytoplasm. Functionally, exhibits a very high intrinsic GTPase hydrolysis rate. Involved in the addition of a carboxymethylaminomethyl (cmnm) group at the wobble position (U34) of certain tRNAs, forming tRNA-cmnm(5)s(2)U34. The sequence is that of tRNA modification GTPase MnmE from Burkholderia mallei (strain NCTC 10247).